The sequence spans 109 residues: Ribonuclease P protein component (109 aa).

It belongs to the RnpA family. As to quaternary structure, consists of a catalytic RNA component (M1 or rnpB) and a protein subunit.

It catalyses the reaction Endonucleolytic cleavage of RNA, removing 5'-extranucleotides from tRNA precursor.. Its function is as follows. RNaseP catalyzes the removal of the 5'-leader sequence from pre-tRNA to produce the mature 5'-terminus. It can also cleave other RNA substrates such as 4.5S RNA. The protein component plays an auxiliary but essential role in vivo by binding to the 5'-leader sequence and broadening the substrate specificity of the ribozyme. This Streptococcus agalactiae serotype Ia (strain ATCC 27591 / A909 / CDC SS700) protein is Ribonuclease P protein component.